A 308-amino-acid chain; its full sequence is Tryptophan 2,3-dioxygenase (308 aa).

Residues 1 to 35 (MQPPGDNAPAGCPFSGAHAAQPAHEAPHVPGDAAG) form a disordered region. A compositionally biased stretch (low complexity) spans 17–30 (AHAAQPAHEAPHVP). Substrate contacts are provided by residues 77 to 81 (FIIQH), Tyr-139, and Arg-143. Residue His-266 participates in heme binding. Substrate is bound at residue Thr-280.

The protein belongs to the tryptophan 2,3-dioxygenase family. In terms of assembly, homotetramer. The cofactor is heme.

It catalyses the reaction L-tryptophan + O2 = N-formyl-L-kynurenine. It functions in the pathway amino-acid degradation; L-tryptophan degradation via kynurenine pathway; L-kynurenine from L-tryptophan: step 1/2. In terms of biological role, heme-dependent dioxygenase that catalyzes the oxidative cleavage of the L-tryptophan (L-Trp) pyrrole ring and converts L-tryptophan to N-formyl-L-kynurenine. Catalyzes the oxidative cleavage of the indole moiety. This chain is Tryptophan 2,3-dioxygenase, found in Burkholderia ambifaria (strain ATCC BAA-244 / DSM 16087 / CCUG 44356 / LMG 19182 / AMMD) (Burkholderia cepacia (strain AMMD)).